We begin with the raw amino-acid sequence, 142 residues long: Hemoglobin subunit alpha-1/2 (142 aa).

Residues 2 to 142 (VLSPADKTNI…VSTVLTSKYR (141 aa)) form the Globin domain. Phosphoserine is present on S4. K8 carries the N6-succinyllysine modification. T9 carries the phosphothreonine modification. K12 bears the N6-succinyllysine mark. N6-acetyllysine; alternate is present on K17. K17 carries the N6-succinyllysine; alternate modification. Phosphotyrosine is present on Y25. The residue at position 41 (K41) is an N6-succinyllysine. H59 contributes to the O2 binding site. H88 contributes to the heme b binding site. Position 103 is a phosphoserine (S103). A Phosphothreonine modification is found at T109. S125 is modified (phosphoserine). A phosphothreonine mark is found at T135 and T138. S139 bears the Phosphoserine mark.

The protein belongs to the globin family. As to quaternary structure, heterotetramer of two alpha chains and two beta chains. As to expression, red blood cells.

Its function is as follows. Involved in oxygen transport from the lung to the various peripheral tissues. This chain is Hemoglobin subunit alpha-1/2, found in Oryctolagus cuniculus (Rabbit).